Consider the following 269-residue polypeptide: Eukaryotic translation initiation factor 3 subunit G-1 (269 aa).

In terms of domain architecture, RRM spans 188–266; that stretch reads AAIRISNLSE…LILSVEWSKP (79 aa).

The protein belongs to the eIF-3 subunit G family. In terms of assembly, component of the eukaryotic translation initiation factor 3 (eIF-3) complex. The eIF-3 complex interacts with pix.

The protein localises to the cytoplasm. Its function is as follows. RNA-binding component of the eukaryotic translation initiation factor 3 (eIF-3) complex, which is involved in protein synthesis of a specialized repertoire of mRNAs and, together with other initiation factors, stimulates binding of mRNA and methionyl-tRNAi to the 40S ribosome. The eIF-3 complex specifically targets and initiates translation of a subset of mRNAs involved in cell proliferation. This subunit can bind 18S rRNA. In Drosophila grimshawi (Hawaiian fruit fly), this protein is Eukaryotic translation initiation factor 3 subunit G-1.